The following is a 392-amino-acid chain: Chorismate synthase (392 aa).

Arg39 and Arg45 together coordinate NADP(+). FMN-binding positions include 131 to 133, 255 to 256, Gly300, 315 to 319, and Arg341; these read RSS, NA, and KPIPT.

Belongs to the chorismate synthase family. As to quaternary structure, homotetramer. It depends on FMNH2 as a cofactor.

The catalysed reaction is 5-O-(1-carboxyvinyl)-3-phosphoshikimate = chorismate + phosphate. It functions in the pathway metabolic intermediate biosynthesis; chorismate biosynthesis; chorismate from D-erythrose 4-phosphate and phosphoenolpyruvate: step 7/7. In terms of biological role, catalyzes the anti-1,4-elimination of the C-3 phosphate and the C-6 proR hydrogen from 5-enolpyruvylshikimate-3-phosphate (EPSP) to yield chorismate, which is the branch point compound that serves as the starting substrate for the three terminal pathways of aromatic amino acid biosynthesis. This reaction introduces a second double bond into the aromatic ring system. This chain is Chorismate synthase, found in Leuconostoc mesenteroides subsp. mesenteroides (strain ATCC 8293 / DSM 20343 / BCRC 11652 / CCM 1803 / JCM 6124 / NCDO 523 / NBRC 100496 / NCIMB 8023 / NCTC 12954 / NRRL B-1118 / 37Y).